A 546-amino-acid polypeptide reads, in one-letter code: CTP synthase (546 aa).

The interval 1–265 is amidoligase domain; it reads MTKYVFVTGG…DEIVCHKLNI (265 aa). Residue Ser-13 coordinates CTP. UTP is bound at residue Ser-13. ATP contacts are provided by residues 14–19 and Asp-71; that span reads SLGKGI. 2 residues coordinate Mg(2+): Asp-71 and Glu-139. CTP-binding positions include 146 to 148, 186 to 191, and Lys-222; these read DIE and KTKPTQ. Residues 186–191 and Lys-222 each bind UTP; that span reads KTKPTQ. The region spanning 290 to 543 is the Glutamine amidotransferase type-1 domain; the sequence is NIAFVGKYVD…VRAALAHQQK (254 aa). Gly-351 serves as a coordination point for L-glutamine. Cys-378 acts as the Nucleophile; for glutamine hydrolysis in catalysis. Residues 379 to 382, Glu-402, and Arg-469 each bind L-glutamine; that span reads LGMQ. Residues His-516 and Glu-518 contribute to the active site.

Belongs to the CTP synthase family. As to quaternary structure, homotetramer.

The catalysed reaction is UTP + L-glutamine + ATP + H2O = CTP + L-glutamate + ADP + phosphate + 2 H(+). The enzyme catalyses L-glutamine + H2O = L-glutamate + NH4(+). It carries out the reaction UTP + NH4(+) + ATP = CTP + ADP + phosphate + 2 H(+). It participates in pyrimidine metabolism; CTP biosynthesis via de novo pathway; CTP from UDP: step 2/2. Its activity is regulated as follows. Allosterically activated by GTP, when glutamine is the substrate; GTP has no effect on the reaction when ammonia is the substrate. The allosteric effector GTP functions by stabilizing the protein conformation that binds the tetrahedral intermediate(s) formed during glutamine hydrolysis. Inhibited by the product CTP, via allosteric rather than competitive inhibition. In terms of biological role, catalyzes the ATP-dependent amination of UTP to CTP with either L-glutamine or ammonia as the source of nitrogen. Regulates intracellular CTP levels through interactions with the four ribonucleotide triphosphates. The protein is CTP synthase of Thiobacillus denitrificans (strain ATCC 25259 / T1).